A 345-amino-acid chain; its full sequence is DNA-directed RNA polymerase subunit alpha (345 aa).

The interval 1 to 241 (MLRDTHLALQ…DQLGMFINFE (241 aa)) is alpha N-terminal domain (alpha-NTD). The interval 257–345 (FNPNLLRKVD…ELVKRSDNPF (89 aa)) is alpha C-terminal domain (alpha-CTD).

This sequence belongs to the RNA polymerase alpha chain family. Homodimer. The RNAP catalytic core consists of 2 alpha, 1 beta, 1 beta' and 1 omega subunit. When a sigma factor is associated with the core the holoenzyme is formed, which can initiate transcription.

It carries out the reaction RNA(n) + a ribonucleoside 5'-triphosphate = RNA(n+1) + diphosphate. Functionally, DNA-dependent RNA polymerase catalyzes the transcription of DNA into RNA using the four ribonucleoside triphosphates as substrates. This Acidiphilium cryptum (strain JF-5) protein is DNA-directed RNA polymerase subunit alpha.